We begin with the raw amino-acid sequence, 155 residues long: Transcription antitermination protein NusB (155 aa).

The protein belongs to the NusB family.

In terms of biological role, involved in transcription antitermination. Required for transcription of ribosomal RNA (rRNA) genes. Binds specifically to the boxA antiterminator sequence of the ribosomal RNA (rrn) operons. The sequence is that of Transcription antitermination protein NusB from Azoarcus sp. (strain BH72).